A 253-amino-acid polypeptide reads, in one-letter code: 5'/3'-nucleotidase SurE (253 aa).

Residues aspartate 8, aspartate 9, serine 39, and asparagine 92 each coordinate a divalent metal cation.

Belongs to the SurE nucleotidase family. It depends on a divalent metal cation as a cofactor.

The protein localises to the cytoplasm. The enzyme catalyses a ribonucleoside 5'-phosphate + H2O = a ribonucleoside + phosphate. The catalysed reaction is a ribonucleoside 3'-phosphate + H2O = a ribonucleoside + phosphate. It catalyses the reaction [phosphate](n) + H2O = [phosphate](n-1) + phosphate + H(+). Functionally, nucleotidase with a broad substrate specificity as it can dephosphorylate various ribo- and deoxyribonucleoside 5'-monophosphates and ribonucleoside 3'-monophosphates with highest affinity to 3'-AMP. Also hydrolyzes polyphosphate (exopolyphosphatase activity) with the preference for short-chain-length substrates (P20-25). Might be involved in the regulation of dNTP and NTP pools, and in the turnover of 3'-mononucleotides produced by numerous intracellular RNases (T1, T2, and F) during the degradation of various RNAs. The sequence is that of 5'/3'-nucleotidase SurE from Escherichia coli O127:H6 (strain E2348/69 / EPEC).